We begin with the raw amino-acid sequence, 359 residues long: Olfactory receptor 5T2 (359 aa).

Over 1–64 the chain is Extracellular; it reads MSYSIYKSTV…GFTDNLELQT (64 aa). N-linked (GlcNAc...) asparagine glycosylation occurs at Asn-44. The helical transmembrane segment at 65–85 threads the bilayer; that stretch reads IFFFLFLAIYLFTLMGNLGLI. Over 86–93 the chain is Cytoplasmic; that stretch reads LVVIRDSQ. A helical membrane pass occupies residues 94–114; it reads LHKPMYYFLSMLSSVDACYSS. The Extracellular portion of the chain corresponds to 115–138; sequence VITPNMLVDFTTKNKVISFLGCVA. The chain crosses the membrane as a helical span at residues 139–159; that stretch reads QVFLACSFGTTECFLLAAMAY. The Cytoplasmic segment spans residues 160-178; the sequence is DRYVAIYNPLLYSVSMSPR. The chain crosses the membrane as a helical span at residues 179-199; that stretch reads VYMPLINASYVAGILHATIHT. Residues 200–235 lie on the Extracellular side of the membrane; that stretch reads VATFSLSFCGANEIRRVFCDIPPLLAISYSDTHTNQ. Residues 236–256 form a helical membrane-spanning segment; it reads LLLFYFVGSIELVTILIVLIS. Residues 257–276 are Cytoplasmic-facing; the sequence is YGLILLAILKMYSAEGRRKV. A helical transmembrane segment spans residues 277–297; sequence FSTCGAHLTGVSIYYGTILFM. The Extracellular segment spans residues 298-310; that stretch reads YVRPSSSYASDHD. Residues 311 to 331 traverse the membrane as a helical segment; that stretch reads MIVSIFYTIVIPLLNPVIYSL. Residues 332-359 are Cytoplasmic-facing; that stretch reads RNKDVKDSMKKMFGKNQVINKVYFHTKK.

Belongs to the G-protein coupled receptor 1 family.

Its subcellular location is the cell membrane. Functionally, odorant receptor. This Homo sapiens (Human) protein is Olfactory receptor 5T2 (OR5T2).